We begin with the raw amino-acid sequence, 225 residues long: Late embryogenesis abundant protein 29 (225 aa).

2 disordered regions span residues 1–167 and 193–225; these read MASN…GGFL and TEEEDKEHYPGSTTTTTATTRTTDPTHQTYQRK. Basic and acidic residues-rich tracts occupy residues 28-39, 49-61, 71-83, and 93-119; these read MRDKAEEGRDKT, KAHETAQSAKDKT, KAHETAQSAKEKT, and KAHETTQAAKEKTSQAGDKAREAKDKA. LEA 11-mer repeat repeat units lie at residues 53–63, 75–85, and 97–107; these read TAQSAKDKTSQ, TAQSAKEKTSQ, and TTQAAKEKTSQ. A compositionally biased stretch (polar residues) spans 141-153; the sequence is TKETAQGAAQYTK. The span at 154–163 shows a compositional bias: basic and acidic residues; it reads ETAEAGRDKT. Residues 205 to 225 show a composition bias toward low complexity; the sequence is TTTTTATTRTTDPTHQTYQRK.

This sequence belongs to the LEA type 4 family.

It is found in the cytoplasm. The protein resides in the cytosol. Functionally, involved dehydration tolerance. The polypeptide is Late embryogenesis abundant protein 29 (Arabidopsis thaliana (Mouse-ear cress)).